Here is a 166-residue protein sequence, read N- to C-terminus: Putative tRNA (cytidine(34)-2'-O)-methyltransferase (166 aa).

S-adenosyl-L-methionine-binding residues include L83, G109, I130, and S138.

This sequence belongs to the class IV-like SAM-binding methyltransferase superfamily. RNA methyltransferase TrmH family. TrmL subfamily.

Its subcellular location is the cytoplasm. It carries out the reaction cytidine(34) in tRNA + S-adenosyl-L-methionine = 2'-O-methylcytidine(34) in tRNA + S-adenosyl-L-homocysteine + H(+). The enzyme catalyses 5-carboxymethylaminomethyluridine(34) in tRNA(Leu) + S-adenosyl-L-methionine = 5-carboxymethylaminomethyl-2'-O-methyluridine(34) in tRNA(Leu) + S-adenosyl-L-homocysteine + H(+). Its function is as follows. Could methylate the ribose at the nucleotide 34 wobble position in tRNA. The chain is Putative tRNA (cytidine(34)-2'-O)-methyltransferase from Mycoplasma pneumoniae (strain ATCC 29342 / M129 / Subtype 1) (Mycoplasmoides pneumoniae).